The sequence spans 428 residues: GTPase Obg (428 aa).

The Obg domain maps to 1 to 158 (MFIDTAKIFV…RWVALELKLL (158 aa)). Residues 159 to 331 (ADVGLLGFPN…VIKEAARMLK (173 aa)) enclose the OBG-type G domain. GTP is bound by residues 165-172 (GFPNVGKS), 190-194 (FTTLK), 212-215 (DVPG), 282-285 (NKCD), and 312-314 (SAA). Positions 172 and 192 each coordinate Mg(2+). Residues 345–428 (RFIPEDKKFT…LNDFEFEYLL (84 aa)) enclose the OCT domain.

The protein belongs to the TRAFAC class OBG-HflX-like GTPase superfamily. OBG GTPase family. Monomer. Mg(2+) serves as cofactor.

It is found in the cytoplasm. An essential GTPase which binds GTP, GDP and possibly (p)ppGpp with moderate affinity, with high nucleotide exchange rates and a fairly low GTP hydrolysis rate. Plays a role in control of the cell cycle, stress response, ribosome biogenesis and in those bacteria that undergo differentiation, in morphogenesis control. The protein is GTPase Obg of Clostridium perfringens (strain ATCC 13124 / DSM 756 / JCM 1290 / NCIMB 6125 / NCTC 8237 / Type A).